Reading from the N-terminus, the 236-residue chain is Phosphoribosylaminoimidazole-succinocarboxamide synthase (236 aa).

Belongs to the SAICAR synthetase family.

The catalysed reaction is 5-amino-1-(5-phospho-D-ribosyl)imidazole-4-carboxylate + L-aspartate + ATP = (2S)-2-[5-amino-1-(5-phospho-beta-D-ribosyl)imidazole-4-carboxamido]succinate + ADP + phosphate + 2 H(+). It participates in purine metabolism; IMP biosynthesis via de novo pathway; 5-amino-1-(5-phospho-D-ribosyl)imidazole-4-carboxamide from 5-amino-1-(5-phospho-D-ribosyl)imidazole-4-carboxylate: step 1/2. The polypeptide is Phosphoribosylaminoimidazole-succinocarboxamide synthase (Campylobacter concisus (strain 13826)).